Reading from the N-terminus, the 2319-residue chain is Coagulation factor VIII (2319 aa).

A signal peptide spans 1-19; it reads MQIALFACFFLSLFNFCSS. 2 Plastocyanin-like domains span residues 20–199 and 207–349; these read AIRR…LLVC and ERTQ…VDSC. The F5/8 type A 1 domain occupies 20-349; the sequence is AIRRYYLGAV…MEAYVKVDSC (330 aa). Asn-61 carries an N-linked (GlcNAc...) asparagine glycan. A disulfide bond links Cys-173 and Cys-199. Residues Asn-233 and Asn-259 are each glycosylated (N-linked (GlcNAc...) asparagine). Tyr-367 bears the Sulfotyrosine mark. Plastocyanin-like domains follow at residues 399 to 573 and 583 to 730; these read KTWI…LLIC and NQMM…VSSC. The 332-residue stretch at 399-730 folds into the F5/8 type A 2 domain; that stretch reads KTWIHYISAE…MTALLKVSSC (332 aa). A glycan (N-linked (GlcNAc...) asparagine) is linked at Asn-423. Cys-547 and Cys-573 are disulfide-bonded. The N-linked (GlcNAc...) asparagine glycan is linked to Asn-601. Sulfotyrosine is present on residues Tyr-737, Tyr-738, and Tyr-742. The b stretch occupies residues 760 to 1640; that stretch reads SFFQNTNHPN…IPPVLKRHQR (881 aa). 19 N-linked (GlcNAc...) asparagine glycosylation sites follow: Asn-880, Asn-958, Asn-1015, Asn-1022, Asn-1026, Asn-1044, Asn-1076, Asn-1087, Asn-1136, Asn-1161, Asn-1192, Asn-1255, Asn-1268, Asn-1273, Asn-1274, Asn-1302, Asn-1316, Asn-1340, and Asn-1378. The interval 1530–1549 is disordered; the sequence is WNKAKRHGESIKGKTESSKN. The segment covering 1536-1548 has biased composition (basic and acidic residues); the sequence is HGESIKGKTESSK. Residues Tyr-1669 and Tyr-1687 each carry the sulfotyrosine modification. Plastocyanin-like domains lie at 1683–1845 and 1855–2008; these read KTRH…LLIC and GRQV…SKQC. The F5/8 type A 3 domain maps to 1683–2008; sequence KTRHYFIAAV…TLFLVYSKQC (326 aa). A glycan (N-linked (GlcNAc...) asparagine) is linked at Asn-1797. Intrachain disulfides connect Cys-1819/Cys-1845, Cys-2008/Cys-2156, and Cys-2161/Cys-2313. F5/8 type C domains follow at residues 2008–2156 and 2161–2313; these read CQIP…LMGC and CSIP…ILGC. Asn-2105 is a glycosylation site (N-linked (GlcNAc...) asparagine).

The protein belongs to the multicopper oxidase family. In terms of assembly, interacts with vWF. vWF binding is essential for the stabilization of F8 in circulation. In terms of processing, the binding of vWF and activation depend on the sulfation of Tyr-1669. Post-translationally, proteolytically cleaved by cathepsin CTSG to produce a partially activated form. In terms of tissue distribution, found in most tissues.

It is found in the secreted. The protein resides in the extracellular space. In terms of biological role, factor VIII, along with calcium and phospholipid, acts as a cofactor for factor IXa when it converts factor X to the activated form, factor Xa. The protein is Coagulation factor VIII (F8) of Mus musculus (Mouse).